The sequence spans 675 residues: Heat shock 70 kDa protein 12A (675 aa).

The interval 1–45 is disordered; sequence MADKEAGGGDAGPRETAPTSTYSSPARSLGDTGITPLSPSHILND. An N-acetylalanine modification is found at A2. Over residues 17 to 26 the composition is skewed to polar residues; that stretch reads APTSTYSSPA.

The protein belongs to the heat shock protein 70 family. In terms of assembly, interacts with SORL1 (via cytosolic C-terminus); this interaction affects SORL1 internalization and subcellular localization. As to expression, expressed most strongly in brain, kidney and heart with little or no expression in other tissues. In the brain, expressed in glial cells, including astrocytes (at protein level). In the aorta, preferentially expressed in lesions.

Its subcellular location is the cytoplasm. The protein resides in the nucleus. Its function is as follows. Adapter protein for SORL1, but not SORT1. Delays SORL1 internalization and affects SORL1 subcellular localization. The polypeptide is Heat shock 70 kDa protein 12A (Hspa12a) (Mus musculus (Mouse)).